A 332-amino-acid polypeptide reads, in one-letter code: Adenine deaminase (332 aa).

His-14, His-16, and His-194 together coordinate Zn(2+). Glu-197 functions as the Proton donor in the catalytic mechanism. Asp-275 provides a ligand contact to Zn(2+). Asp-276 serves as a coordination point for substrate.

It belongs to the metallo-dependent hydrolases superfamily. Adenosine and AMP deaminases family. Adenine deaminase type 2 subfamily. Zn(2+) serves as cofactor.

It catalyses the reaction adenine + H2O + H(+) = hypoxanthine + NH4(+). Catalyzes the hydrolytic deamination of adenine to hypoxanthine. Plays an important role in the purine salvage pathway and in nitrogen catabolism. The sequence is that of Adenine deaminase from Psychrobacter cryohalolentis (strain ATCC BAA-1226 / DSM 17306 / VKM B-2378 / K5).